The following is a 206-amino-acid chain: Peptidyl-tRNA hydrolase (206 aa).

Tyr-19 contacts tRNA. The active-site Proton acceptor is the His-24. TRNA is bound by residues Phe-70, Asn-72, and Asn-118.

The protein belongs to the PTH family. In terms of assembly, monomer.

It is found in the cytoplasm. It carries out the reaction an N-acyl-L-alpha-aminoacyl-tRNA + H2O = an N-acyl-L-amino acid + a tRNA + H(+). In terms of biological role, hydrolyzes ribosome-free peptidyl-tRNAs (with 1 or more amino acids incorporated), which drop off the ribosome during protein synthesis, or as a result of ribosome stalling. Functionally, catalyzes the release of premature peptidyl moieties from peptidyl-tRNA molecules trapped in stalled 50S ribosomal subunits, and thus maintains levels of free tRNAs and 50S ribosomes. The sequence is that of Peptidyl-tRNA hydrolase from Synechococcus sp. (strain CC9902).